The following is a 396-amino-acid chain: Lipid-A-disaccharide synthase (396 aa).

Belongs to the LpxB family.

The catalysed reaction is a lipid X + a UDP-2-N,3-O-bis[(3R)-3-hydroxyacyl]-alpha-D-glucosamine = a lipid A disaccharide + UDP + H(+). It participates in bacterial outer membrane biogenesis; LPS lipid A biosynthesis. Condensation of UDP-2,3-diacylglucosamine and 2,3-diacylglucosamine-1-phosphate to form lipid A disaccharide, a precursor of lipid A, a phosphorylated glycolipid that anchors the lipopolysaccharide to the outer membrane of the cell. The chain is Lipid-A-disaccharide synthase from Hahella chejuensis (strain KCTC 2396).